Consider the following 103-residue polypeptide: G0/G1 switch protein 2 (103 aa).

As to quaternary structure, directly interacts with BCL2; this interaction prevents the formation of the anti-apoptotic BAX-BCL2 complex.

Its subcellular location is the mitochondrion. Promotes apoptosis by binding to BCL2, hence preventing the formation of protective BCL2-BAX heterodimers. In Mus musculus (Mouse), this protein is G0/G1 switch protein 2 (G0s2).